The sequence spans 230 residues: 2-C-methyl-D-erythritol 4-phosphate cytidylyltransferase (230 aa).

This sequence belongs to the IspD/TarI cytidylyltransferase family. IspD subfamily.

The catalysed reaction is 2-C-methyl-D-erythritol 4-phosphate + CTP + H(+) = 4-CDP-2-C-methyl-D-erythritol + diphosphate. Its pathway is isoprenoid biosynthesis; isopentenyl diphosphate biosynthesis via DXP pathway; isopentenyl diphosphate from 1-deoxy-D-xylulose 5-phosphate: step 2/6. Its function is as follows. Catalyzes the formation of 4-diphosphocytidyl-2-C-methyl-D-erythritol from CTP and 2-C-methyl-D-erythritol 4-phosphate (MEP). The protein is 2-C-methyl-D-erythritol 4-phosphate cytidylyltransferase of Synechocystis sp. (strain ATCC 27184 / PCC 6803 / Kazusa).